The chain runs to 121 residues: Ribosome-binding factor A (121 aa).

It belongs to the RbfA family. As to quaternary structure, monomer. Binds 30S ribosomal subunits, but not 50S ribosomal subunits or 70S ribosomes.

It localises to the cytoplasm. One of several proteins that assist in the late maturation steps of the functional core of the 30S ribosomal subunit. Associates with free 30S ribosomal subunits (but not with 30S subunits that are part of 70S ribosomes or polysomes). Required for efficient processing of 16S rRNA. May interact with the 5'-terminal helix region of 16S rRNA. The polypeptide is Ribosome-binding factor A (Lactobacillus acidophilus (strain ATCC 700396 / NCK56 / N2 / NCFM)).